A 117-amino-acid polypeptide reads, in one-letter code: NADH-ubiquinone oxidoreductase chain 3 (117 aa).

3 helical membrane-spanning segments follow: residues 1-21 (MLML…VMML), 57-77 (FFLI…LLPM), and 86-106 (LMNW…GLYH).

Belongs to the complex I subunit 3 family.

It localises to the mitochondrion membrane. The enzyme catalyses a ubiquinone + NADH + 5 H(+)(in) = a ubiquinol + NAD(+) + 4 H(+)(out). Core subunit of the mitochondrial membrane respiratory chain NADH dehydrogenase (Complex I) that is believed to belong to the minimal assembly required for catalysis. Complex I functions in the transfer of electrons from NADH to the respiratory chain. The immediate electron acceptor for the enzyme is believed to be ubiquinone. The polypeptide is NADH-ubiquinone oxidoreductase chain 3 (ND3) (Anopheles quadrimaculatus (Common malaria mosquito)).